Here is a 106-residue protein sequence, read N- to C-terminus: Evasin P1168 (106 aa).

An N-terminal signal peptide occupies residues 1-24; it reads MEVKISTFLQIAVLIVLGIHLIAA. 3 cysteine pairs are disulfide-bonded: Cys-45/Cys-67, Cys-49/Cys-69, and Cys-60/Cys-80. N-linked (GlcNAc...) asparagine glycans are attached at residues Asn-48, Asn-54, and Asn-64.

The protein localises to the secreted. In terms of biological role, salivary chemokine-binding protein which binds to host chemokines CXCL1, CXCL2 and CXCL8. The protein is Evasin P1168 of Ixodes ricinus (Common tick).